The following is a 194-amino-acid chain: Large ribosomal subunit protein eL15 (194 aa).

Positions A165–K194 are disordered.

The protein belongs to the eukaryotic ribosomal protein eL15 family.

This is Large ribosomal subunit protein eL15 from Methanococcus aeolicus (strain ATCC BAA-1280 / DSM 17508 / OCM 812 / Nankai-3).